Consider the following 153-residue polypeptide: UPF0225 protein ETA_15740 (153 aa).

Belongs to the UPF0225 family.

This is UPF0225 protein ETA_15740 from Erwinia tasmaniensis (strain DSM 17950 / CFBP 7177 / CIP 109463 / NCPPB 4357 / Et1/99).